Consider the following 313-residue polypeptide: Beta-ketoacyl-[acyl-carrier-protein] synthase III (313 aa).

Active-site residues include Cys112 and His238. Residues 239-243 (QANIR) are ACP-binding. Asn268 is a catalytic residue.

It belongs to the thiolase-like superfamily. FabH family. As to quaternary structure, homodimer.

It localises to the cytoplasm. The enzyme catalyses malonyl-[ACP] + acetyl-CoA + H(+) = 3-oxobutanoyl-[ACP] + CO2 + CoA. It functions in the pathway lipid metabolism; fatty acid biosynthesis. Its function is as follows. Catalyzes the condensation reaction of fatty acid synthesis by the addition to an acyl acceptor of two carbons from malonyl-ACP. Catalyzes the first condensation reaction which initiates fatty acid synthesis and may therefore play a role in governing the total rate of fatty acid production. Possesses both acetoacetyl-ACP synthase and acetyl transacylase activities. Its substrate specificity determines the biosynthesis of branched-chain and/or straight-chain of fatty acids. The chain is Beta-ketoacyl-[acyl-carrier-protein] synthase III from Staphylococcus aureus (strain bovine RF122 / ET3-1).